The primary structure comprises 274 residues: Fatty-acid O-methyltransferase (274 aa).

This sequence belongs to the methyltransferase superfamily.

The enzyme catalyses a fatty acid + S-adenosyl-L-methionine = a fatty acid methyl ester + S-adenosyl-L-homocysteine. O-methyltransferase that modifies the hydroxy group of the fatty acids. Oleate is the most effective fatty acid acceptor. This chain is Fatty-acid O-methyltransferase (mtf2), found in Mycolicibacterium smegmatis (strain ATCC 700084 / mc(2)155) (Mycobacterium smegmatis).